The following is a 142-amino-acid chain: MVLSPADKSNVKATWDKIGSHAGEYGGEALERTFASFPTTKTYFPHFDLSPGSAQVKAHGKKVADALTTAAGHLDDLPGALSALSDLHAHKLRVDPVNFKFLSHCLLVTLASHHPAEFTPAVHASLDKFFSAVSTVLTSKYR.

In terms of domain architecture, Globin spans valine 2–arginine 142. A Phosphoserine modification is found at serine 4. N6-succinyllysine occurs at positions 8 and 12. Residue lysine 17 is modified to N6-acetyllysine; alternate. Lysine 17 bears the N6-succinyllysine; alternate mark. Tyrosine 25 bears the Phosphotyrosine mark. Serine 36 is modified (phosphoserine). An N6-succinyllysine modification is found at lysine 41. Serine 50 is modified (phosphoserine). Histidine 59 contributes to the O2 binding site. Residue histidine 88 participates in heme b binding. At serine 103 the chain carries Phosphoserine. A Phosphothreonine modification is found at threonine 109. Serine 125 carries the phosphoserine modification. A phosphothreonine mark is found at threonine 135 and threonine 138. At serine 139 the chain carries Phosphoserine.

Belongs to the globin family. Heterotetramer of two alpha chains and two beta chains. In terms of tissue distribution, red blood cells.

In terms of biological role, involved in oxygen transport from the lung to the various peripheral tissues. Hemopressin acts as an antagonist peptide of the cannabinoid receptor CNR1. Hemopressin-binding efficiently blocks cannabinoid receptor CNR1 and subsequent signaling. This is Hemoglobin subunit alpha (HBA) from Ursus maritimus (Polar bear).